The primary structure comprises 87 residues: Small ribosomal subunit protein bS20 (87 aa).

The segment at 1 to 25 (MANTAQARKRARQSVQRNKHNSSLR) is disordered. The span at 7–22 (ARKRARQSVQRNKHNS) shows a compositional bias: basic residues.

The protein belongs to the bacterial ribosomal protein bS20 family.

Functionally, binds directly to 16S ribosomal RNA. In Bordetella bronchiseptica (strain ATCC BAA-588 / NCTC 13252 / RB50) (Alcaligenes bronchisepticus), this protein is Small ribosomal subunit protein bS20.